The sequence spans 67 residues: LPS-assembly lipoprotein LptM (67 aa).

Positions 1–19 are cleaved as a signal peptide; sequence MKNVFKALTVLLTLFSLTG. The N-palmitoyl cysteine moiety is linked to residue cysteine 20. A lipid anchor (S-diacylglycerol cysteine) is attached at cysteine 20. The disordered stretch occupies residues 26–67; the sequence is LYFPPADKNAPPPTKPVETQTQSTVPDKNDRATGDGPSQVNY. The segment covering 42–51 has biased composition (polar residues); it reads VETQTQSTVP.

It belongs to the LptM family. In terms of assembly, interacts with the outer membrane embedded portion of the LPS translocon formed by LptD and LptE (LptDE).

It localises to the cell outer membrane. In terms of biological role, component of the lipopolysaccharide (LPS) transport (Lpt) pathway that promotes efficient assembly of the outer membrane LPS translocon (LptDE) by the BAM complex. Facilitates oxidative maturation of LptD by stabilizing a conformation of the LPS translocon in which LptD can efficiently acquire native disulfide bonds, thereby activating the LPS translocon. The protein is LPS-assembly lipoprotein LptM of Escherichia coli O157:H7.